The chain runs to 408 residues: LysM domain-containing protein ARB_01488 (408 aa).

An N-terminal signal peptide occupies residues 1 to 17 (MVKYALLPLVAVSLVQA). Residues 42–91 (SWINVVDASGKLTCDAFLDTINVAKRQFIFWNPQLNSDCSNIQSKASYCA) form the LysM 1 domain. Residues 98–178 (SKQTRGQMDP…HGPKEAPPPD (81 aa)) form a disordered region. Residues 106–116 (DPPPKTKPLPP) are compositionally biased toward pro residues. LysM domains follow at residues 270-320 (QYHT…RVCV) and 360-406 (SFEL…YACV).

It localises to the secreted. In terms of biological role, might have a role in sequestration of chitin oligosaccharides (breakdown products of fungal cell walls that are released during invasion and act as triggers of host immunity) to dampen host defense. The polypeptide is LysM domain-containing protein ARB_01488 (Arthroderma benhamiae (strain ATCC MYA-4681 / CBS 112371) (Trichophyton mentagrophytes)).